Consider the following 352-residue polypeptide: Minor capsid protein VP2 (352 aa).

G2 carries the N-myristoyl glycine; by host lipid modification. The segment at 273–308 (SGEFIEKFEAPGGANQRTAPQWMLPLLLGLYGSVTS) is D1. A helical membrane pass occupies residues 290 to 310 (TAPQWMLPLLLGLYGSVTSAL). Positions 313–352 (YEDGPNKKKRKLSRGSSQKTKGTSASAKARHKRRNRSSRS) are disordered. Positions 313–352 (YEDGPNKKKRKLSRGSSQKTKGTSASAKARHKRRNRSSRS) are DNA-binding. The short motif at 316–324 (GPNKKKRKL) is the Nuclear localization signal element. Polar residues predominate over residues 326-338 (RGSSQKTKGTSAS). Over residues 340–352 (KARHKRRNRSSRS) the composition is skewed to basic residues.

It belongs to the polyomaviruses capsid protein VP2 family. In terms of assembly, forms homooligomers, and heterooligomers with VP3 in the endoplasmic reticulum membrane. Interacts (via D1 domain) with VP1. Interacts (via D1 domain) with VP1. Interacts (via C-terminus) with host SP1, this is probably also the case for VP2; this interaction represses SP1 activation of the SV40 early promoter and participates in virion assembly. Interacts (via nuclear localization signal) with host importin alpha2-beta heterodimer. As to quaternary structure, oligomerizes with VP3 in the nucleus.

The protein localises to the virion. The protein resides in the host nucleus. It is found in the host endoplasmic reticulum. Its subcellular location is the host endoplasmic reticulum membrane. In terms of biological role, structural protein that resides within the core of the capsid surrounded by 72 VP1 pentamers. Following virus endocytosis and trafficking to the endoplasmic reticulum, VP2 and VP3 form oligomers and integrate into the endoplasmic reticulum membrane. Heterooligomer VP2-VP3 may create a viroporin for transporting the viral genome across the endoplasmic reticulum membrane to the cytoplasm. Nuclear entry of the viral DNA involves the selective exposure and importin recognition of VP2 or VP3 nuclear localization signal (shared C-terminus). Plays a role in virion assembly within the nucleus in particular through a DNA-binding domain located in the C-terminal region. An N-terminal myristoylation suggests a scaffold function for virion assembly. The viral progenies exit the cells by lytic release. Isoform VP2 may repress SP1 activation of the SV40 early promoter, via specific protein-protein and protein-DNA interactions. Its function is as follows. Structural protein that resides within the core of the capsid surrounded by 72 VP1 pentamers. Following virus entry, VP2 and VP3 form oligomers and integrate into the endoplasmic reticulum membrane. Heterooligomer VP2-VP3 may create a viroporin for transporting the viral genome across the endoplasmic reticulum membrane. Essential for focus formation and virus endoplasmic reticulum-to-cytosol membrane transport, required to recruit selective cellular components to the foci in the ER membrane. Nuclear entry of the viral DNA involves the selective exposure and importin recognition of VP2 or VP3 nuclear localization signal (shared C-terminus). Isoform VP3 represses SP1 activation of the SV40 early promoter, via specific protein-protein and protein-DNA interactions. SP1 additionally participates in recruiting VP3 to the SV40 minichromosome during SV40 assembly. Plays a role in virion assembly within the nucleus. May initiate host cell lysis when associated with VP4. Viroporin inducing perforation of cellular membranes to trigger virus progeny release. Forms pores of 3 nm inner diameter. VP4 is expressed about 24 hours after the late structural proteins and is not incorporated into the mature virion. The protein is Minor capsid protein VP2 of Simian virus 40 (SV40).